The chain runs to 55 residues: Regulatory protein MokB (55 aa).

Overlapping regulatory peptide whose translation enables hokB expression. The protein is Regulatory protein MokB (mokB) of Escherichia coli (strain K12).